The primary structure comprises 145 residues: Basic phospholipase A2 BFPA (145 aa).

A signal peptide spans 1 to 27; sequence MNPAHLLVLLAVCVSLLGAANIPPQSL. 7 disulfides stabilise this stretch: C38–C97, C52–C144, C54–C70, C69–C125, C76–C118, C86–C111, and C104–C116. Y53, G55, and G57 together coordinate Ca(2+). H73 is a catalytic residue. D74 lines the Ca(2+) pocket. D119 is an active-site residue.

This sequence belongs to the phospholipase A2 family. Group I subfamily. D49 sub-subfamily. As to quaternary structure, homodimer; disulfide-linked. It depends on Ca(2+) as a cofactor. In terms of tissue distribution, expressed by the venom gland.

It is found in the secreted. The catalysed reaction is a 1,2-diacyl-sn-glycero-3-phosphocholine + H2O = a 1-acyl-sn-glycero-3-phosphocholine + a fatty acid + H(+). Functionally, snake venom phospholipase A2 (PLA2) that inhibits blood coagulation and shows bactericidal activities against both Gram-negative and -positive bacteria (E.coli, MIC=0.4 uM and S.aureus, MIC=0.1 uM). PLA2 catalyzes the calcium-dependent hydrolysis of the 2-acyl groups in 3-sn-phosphoglycerides. This Bungarus fasciatus (Banded krait) protein is Basic phospholipase A2 BFPA.